Reading from the N-terminus, the 353-residue chain is Biotin synthase (353 aa).

Positions 1–22 are enriched in low complexity; that stretch reads MTACSTTPTTSATSAQPAAGSP. The tract at residues 1-30 is disordered; that stretch reads MTACSTTPTTSATSAQPAAGSPLQWHARPS. In terms of domain architecture, Radical SAM core spans 72–299; the sequence is GDIELATLLS…TARVRLSAGR (228 aa). [4Fe-4S] cluster-binding residues include cysteine 87, cysteine 91, and cysteine 94. Cysteine 131, cysteine 162, cysteine 222, and arginine 294 together coordinate [2Fe-2S] cluster.

It belongs to the radical SAM superfamily. Biotin synthase family. In terms of assembly, homodimer. [4Fe-4S] cluster is required as a cofactor. [2Fe-2S] cluster serves as cofactor.

It catalyses the reaction (4R,5S)-dethiobiotin + (sulfur carrier)-SH + 2 reduced [2Fe-2S]-[ferredoxin] + 2 S-adenosyl-L-methionine = (sulfur carrier)-H + biotin + 2 5'-deoxyadenosine + 2 L-methionine + 2 oxidized [2Fe-2S]-[ferredoxin]. Its pathway is cofactor biosynthesis; biotin biosynthesis; biotin from 7,8-diaminononanoate: step 2/2. Its function is as follows. Catalyzes the conversion of dethiobiotin (DTB) to biotin by the insertion of a sulfur atom into dethiobiotin via a radical-based mechanism. In Delftia acidovorans (strain DSM 14801 / SPH-1), this protein is Biotin synthase.